The following is a 289-amino-acid chain: Glucosamine-6-phosphate deaminase 1 (289 aa).

K64 carries the N6-acetyllysine modification. Catalysis depends on D72, which acts as the Proton acceptor; for enolization step. D141 functions as the For ring-opening step in the catalytic mechanism. Residue H143 is the Proton acceptor; for ring-opening step of the active site. E148 serves as the catalytic For ring-opening step. T161 carries the phosphothreonine modification.

It belongs to the glucosamine/galactosamine-6-phosphate isomerase family. Homohexamer. In terms of tissue distribution, at the equatorial segment of the sperm head.

It is found in the cytoplasm. It carries out the reaction alpha-D-glucosamine 6-phosphate + H2O = beta-D-fructose 6-phosphate + NH4(+). It functions in the pathway nucleotide-sugar biosynthesis; UDP-N-acetyl-alpha-D-glucosamine biosynthesis; alpha-D-glucosamine 6-phosphate from D-fructose 6-phosphate: step 1/1. Its activity is regulated as follows. Allosterically activated by N-acetylglucosamine-6-phosphate (GlcNAc6P). In terms of biological role, catalyzes the reversible conversion of alpha-D-glucosamine 6-phosphate (GlcN-6P) into beta-D-fructose 6-phosphate (Fru-6P) and ammonium ion, a regulatory reaction step in de novo uridine diphosphate-N-acetyl-alpha-D-glucosamine (UDP-GlcNAc) biosynthesis via hexosamine pathway. Deamination is coupled to aldo-keto isomerization mediating the metabolic flux from UDP-GlcNAc toward Fru-6P. At high ammonium level can drive amination and isomerization of Fru-6P toward hexosamines and UDP-GlcNAc synthesis. Has a role in fine tuning the metabolic fluctuations of cytosolic UDP-GlcNAc and their effects on hyaluronan synthesis that occur during tissue remodeling. Seems to trigger calcium oscillations in mammalian eggs. These oscillations serve as the essential trigger for egg activation and early development of the embryo. This chain is Glucosamine-6-phosphate deaminase 1, found in Mesocricetus auratus (Golden hamster).